A 288-amino-acid polypeptide reads, in one-letter code: Polyamine aminopropyltransferase (288 aa).

One can recognise a PABS domain in the interval Ser9–Met242. Gln36 contacts S-methyl-5'-thioadenosine. Residues His67 and Asp91 each coordinate spermidine. Residues Glu111 and Asn143–Gly144 contribute to the S-methyl-5'-thioadenosine site. Asp162 functions as the Proton acceptor in the catalytic mechanism. Position 169 (Pro169) interacts with S-methyl-5'-thioadenosine.

It belongs to the spermidine/spermine synthase family. Homodimer or homotetramer.

The protein resides in the cytoplasm. The catalysed reaction is S-adenosyl 3-(methylsulfanyl)propylamine + putrescine = S-methyl-5'-thioadenosine + spermidine + H(+). Its pathway is amine and polyamine biosynthesis; spermidine biosynthesis; spermidine from putrescine: step 1/1. Catalyzes the irreversible transfer of a propylamine group from the amino donor S-adenosylmethioninamine (decarboxy-AdoMet) to putrescine (1,4-diaminobutane) to yield spermidine. In Prochlorococcus marinus (strain NATL1A), this protein is Polyamine aminopropyltransferase.